We begin with the raw amino-acid sequence, 799 residues long: Zinc finger protein 227 (799 aa).

One can recognise a KRAB domain in the interval 23–94 (VTFKDVAVVF…ETETQRSSKH (72 aa)). 19 consecutive C2H2-type zinc fingers follow at residues 250-272 (HPCG…PNVH), 269-291 (PNVH…QRIH), 324-346 (YRCD…YRTH), 352-374 (YKCE…QRVH), 380-402 (YKCE…QRVH), 408-430 (YKCE…QRVH), 436-458 (YKCD…RRVH), 464-486 (YKCE…FRVH), 492-514 (YKCK…QNVH), 520-542 (FKCE…QRVH), 548-570 (YRCD…QVIH), 576-598 (YKCE…QRVH), 604-626 (YKCE…QRVH), 632-654 (YKCG…QRVH), 660-682 (YKCD…QRGH), 688-710 (YKCE…QRVH), 716-738 (HICE…LGVH), 744-766 (FKCE…QRVH), and 772-794 (YKCD…QKVH).

It belongs to the krueppel C2H2-type zinc-finger protein family.

The protein localises to the nucleus. Functionally, may be involved in transcriptional regulation. This Homo sapiens (Human) protein is Zinc finger protein 227 (ZNF227).